Here is a 154-residue protein sequence, read N- to C-terminus: Superoxide dismutase [Cu-Zn] (154 aa).

Positions 47, 49, and 64 each coordinate Cu cation. Cysteine 58 and cysteine 147 are oxidised to a cystine. Residues histidine 64, histidine 72, histidine 81, and aspartate 84 each coordinate Zn(2+). Histidine 121 contacts Cu cation. A compositionally biased stretch (basic and acidic residues) spans 125-137 (DDLGRGGNEESKK). A disordered region spans residues 125 to 147 (DDLGRGGNEESKKTGNAGPRPAC). A substrate-binding site is contributed by arginine 144.

Belongs to the Cu-Zn superoxide dismutase family. As to quaternary structure, homodimer. Cu cation is required as a cofactor. Requires Zn(2+) as cofactor.

The protein localises to the cytoplasm. The catalysed reaction is 2 superoxide + 2 H(+) = H2O2 + O2. Functionally, destroys radicals which are normally produced within the cells and which are toxic to biological systems. The protein is Superoxide dismutase [Cu-Zn] of Aspergillus niger (strain ATCC MYA-4892 / CBS 513.88 / FGSC A1513).